The chain runs to 268 residues: 4-hydroxy-tetrahydrodipicolinate reductase (268 aa).

Residues 10-15 and D36 each bind NAD(+); that span reads GASGRM. Position 37 (R37) interacts with NADP(+). NAD(+)-binding positions include 99-101 and 123-126; these read GTT and SANM. The active-site Proton donor/acceptor is H156. H157 contacts (S)-2,3,4,5-tetrahydrodipicolinate. The active-site Proton donor is K160. (S)-2,3,4,5-tetrahydrodipicolinate is bound at residue 166–167; the sequence is GT.

Belongs to the DapB family.

The protein localises to the cytoplasm. The enzyme catalyses (S)-2,3,4,5-tetrahydrodipicolinate + NAD(+) + H2O = (2S,4S)-4-hydroxy-2,3,4,5-tetrahydrodipicolinate + NADH + H(+). It carries out the reaction (S)-2,3,4,5-tetrahydrodipicolinate + NADP(+) + H2O = (2S,4S)-4-hydroxy-2,3,4,5-tetrahydrodipicolinate + NADPH + H(+). Its pathway is amino-acid biosynthesis; L-lysine biosynthesis via DAP pathway; (S)-tetrahydrodipicolinate from L-aspartate: step 4/4. In terms of biological role, catalyzes the conversion of 4-hydroxy-tetrahydrodipicolinate (HTPA) to tetrahydrodipicolinate. This Burkholderia pseudomallei (strain 1710b) protein is 4-hydroxy-tetrahydrodipicolinate reductase.